The following is a 119-amino-acid chain: BLOC-1-related complex subunit 8 (119 aa).

At serine 109 the chain carries Phosphoserine.

Belongs to the BORCS8 family. In terms of assembly, component of the BLOC-one-related complex (BORC) which is composed of BLOC1S1, BLOC1S2, BORCS5, BORCS6, BORCS7, BORCS8, KXD1 and SNAPIN.

It localises to the lysosome membrane. In terms of biological role, as part of the BLOC-one-related complex (BORC), it plays a role in the movement and localization of lysosomes at the cell periphery. Associated with the cytosolic face of lysosomes, BORC recruits ARL8B to the lysosomal membrane and couples lysosomes to microtubule plus-end-directed kinesin motors, driving lysosome movement toward the cell periphery. The protein is BLOC-1-related complex subunit 8 of Homo sapiens (Human).